Here is a 333-residue protein sequence, read N- to C-terminus: Glyceraldehyde-3-phosphate dehydrogenase 1 (333 aa).

NAD(+)-binding positions include 12–13 (RI), Asp35, and Arg79. D-glyceraldehyde 3-phosphate-binding positions include 152–154 (SCT), Thr183, Arg198, 211–212 (SG), and Arg234. Cys153 serves as the catalytic Nucleophile. Asn314 serves as a coordination point for NAD(+).

It belongs to the glyceraldehyde-3-phosphate dehydrogenase family. In terms of assembly, homotetramer.

Its subcellular location is the cytoplasm. The catalysed reaction is D-glyceraldehyde 3-phosphate + phosphate + NAD(+) = (2R)-3-phospho-glyceroyl phosphate + NADH + H(+). Its pathway is carbohydrate degradation; glycolysis; pyruvate from D-glyceraldehyde 3-phosphate: step 1/5. Its activity is regulated as follows. Resistant to pentalenolactone (PL). In terms of biological role, catalyzes the oxidative phosphorylation of glyceraldehyde 3-phosphate (G3P) to 1,3-bisphosphoglycerate (BPG) using the cofactor NAD. The first reaction step involves the formation of a hemiacetal intermediate between G3P and a cysteine residue, and this hemiacetal intermediate is then oxidized to a thioester, with concomitant reduction of NAD to NADH. The reduced NADH is then exchanged with the second NAD, and the thioester is attacked by a nucleophilic inorganic phosphate to produce BPG. This Streptomyces arenae protein is Glyceraldehyde-3-phosphate dehydrogenase 1 (gap1).